Consider the following 691-residue polypeptide: Protein 4.2 (691 aa).

Glycine 2 is lipidated: N-myristoyl glycine. The interval 31–39 (LTLRRGQSF) is band 3 binding. Serine 248 carries the phosphoserine modification. Phosphotyrosine is present on tyrosine 570.

This sequence belongs to the transglutaminase superfamily. Transglutaminase family. As to quaternary structure, component of the ankyrin-1 complex in the erythrocyte, composed of ANK1, RHCE, RHAG, SLC4A1, EPB42, GYPA, GYPB and AQP1. Interacts with SLC4A1 (via the cytoplasmic domain); this interaction is mediated by the SLC4A1 Band 3-I dimer. Interacts with ANK1 (via ANK 1-13 repeats). Interacts with AQP1 (via the C-terminal).

Its subcellular location is the cell membrane. The protein resides in the cytoplasm. It is found in the cytoskeleton. Component of the ankyrin-1 complex, a multiprotein complex involved in the stability and shape of the erythrocyte membrane. The polypeptide is Protein 4.2 (Mus musculus (Mouse)).